A 227-amino-acid chain; its full sequence is Probable cytokinin riboside 5'-monophosphate phosphoribohydrolase LOGL9 (227 aa).

Over residues 1–15 (MYISSPHTSHFTSID) the composition is skewed to polar residues. Residues 1 to 26 (MYISSPHTSHFTSIDRSPAVVSESDR) form a disordered region. Substrate contacts are provided by residues E117, 135–136 (RK), and 152–158 (GYGTLEE).

The protein belongs to the LOG family. In terms of tissue distribution, expressed in roots, leaves and stems.

It catalyses the reaction N(6)-(dimethylallyl)adenosine 5'-phosphate + H2O = N(6)-dimethylallyladenine + D-ribose 5-phosphate. The catalysed reaction is 9-ribosyl-trans-zeatin 5'-phosphate + H2O = trans-zeatin + D-ribose 5-phosphate. Functionally, cytokinin-activating enzyme working in the direct activation pathway. Phosphoribohydrolase that converts inactive cytokinin nucleotides to the biologically active free-base forms. The chain is Probable cytokinin riboside 5'-monophosphate phosphoribohydrolase LOGL9 (LOGL9) from Oryza sativa subsp. japonica (Rice).